The primary structure comprises 202 residues: MKGNLFIITAPSGAGKTSLVRALLDGDEHIKLSVSHTTRKPRPGEEDGVHYHFVEEARFVELLNHGDFLESAQVHGAYYGTSQSTVNSALAEGYDLILEIDWQGAQQVRSLYADAISIFILPPSMEALEQRLNNRAQDSAEVIARRLAAAREEMRHVTEFDYVTINDRFEHALEDLRAIIRSQRLRREKQLIRYQDVVQKLL.

The Guanylate kinase-like domain maps to 3–181; sequence GNLFIITAPS…ALEDLRAIIR (179 aa). Residue 10–17 participates in ATP binding; it reads APSGAGKT.

The protein belongs to the guanylate kinase family.

The protein resides in the cytoplasm. The enzyme catalyses GMP + ATP = GDP + ADP. Its function is as follows. Essential for recycling GMP and indirectly, cGMP. This chain is Guanylate kinase, found in Methylobacillus flagellatus (strain ATCC 51484 / DSM 6875 / VKM B-1610 / KT).